The primary structure comprises 180 residues: ATP synthase subunit delta (180 aa).

The protein belongs to the ATPase delta chain family. In terms of assembly, F-type ATPases have 2 components, F(1) - the catalytic core - and F(0) - the membrane proton channel. F(1) has five subunits: alpha(3), beta(3), gamma(1), delta(1), epsilon(1). F(0) has three main subunits: a(1), b(2) and c(10-14). The alpha and beta chains form an alternating ring which encloses part of the gamma chain. F(1) is attached to F(0) by a central stalk formed by the gamma and epsilon chains, while a peripheral stalk is formed by the delta and b chains.

It is found in the cell inner membrane. F(1)F(0) ATP synthase produces ATP from ADP in the presence of a proton or sodium gradient. F-type ATPases consist of two structural domains, F(1) containing the extramembraneous catalytic core and F(0) containing the membrane proton channel, linked together by a central stalk and a peripheral stalk. During catalysis, ATP synthesis in the catalytic domain of F(1) is coupled via a rotary mechanism of the central stalk subunits to proton translocation. Functionally, this protein is part of the stalk that links CF(0) to CF(1). It either transmits conformational changes from CF(0) to CF(1) or is implicated in proton conduction. The sequence is that of ATP synthase subunit delta from Paracidovorax citrulli (strain AAC00-1) (Acidovorax citrulli).